Reading from the N-terminus, the 365-residue chain is Methylthioribose-1-phosphate isomerase (365 aa).

Substrate is bound by residues 53–55, arginine 90, and glutamine 201; that span reads RGA. Aspartate 242 serves as the catalytic Proton donor. Substrate is bound at residue 252–253; it reads NK.

The protein belongs to the eIF-2B alpha/beta/delta subunits family. MtnA subfamily.

The enzyme catalyses 5-(methylsulfanyl)-alpha-D-ribose 1-phosphate = 5-(methylsulfanyl)-D-ribulose 1-phosphate. It functions in the pathway amino-acid biosynthesis; L-methionine biosynthesis via salvage pathway; L-methionine from S-methyl-5-thio-alpha-D-ribose 1-phosphate: step 1/6. Functionally, catalyzes the interconversion of methylthioribose-1-phosphate (MTR-1-P) into methylthioribulose-1-phosphate (MTRu-1-P). This is Methylthioribose-1-phosphate isomerase from Methylorubrum extorquens (strain CM4 / NCIMB 13688) (Methylobacterium extorquens).